A 345-amino-acid chain; its full sequence is Tetraacyldisaccharide 4'-kinase (345 aa).

Residue 51–58 (HVGGAGKT) participates in ATP binding.

Belongs to the LpxK family.

The catalysed reaction is a lipid A disaccharide + ATP = a lipid IVA + ADP + H(+). The protein operates within glycolipid biosynthesis; lipid IV(A) biosynthesis; lipid IV(A) from (3R)-3-hydroxytetradecanoyl-[acyl-carrier-protein] and UDP-N-acetyl-alpha-D-glucosamine: step 6/6. Its function is as follows. Transfers the gamma-phosphate of ATP to the 4'-position of a tetraacyldisaccharide 1-phosphate intermediate (termed DS-1-P) to form tetraacyldisaccharide 1,4'-bis-phosphate (lipid IVA). The sequence is that of Tetraacyldisaccharide 4'-kinase from Bradyrhizobium sp. (strain BTAi1 / ATCC BAA-1182).